The following is a 477-amino-acid chain: Ubiquitin carboxyl-terminal hydrolase 7 (477 aa).

The Ubiquitin-like domain occupies 2-77; it reads LTVSVKWQKK…LMMMGTADEI (76 aa). Positions 104–473 constitute a USP domain; the sequence is AGLVNLGNTC…MAYIVMYKAR (370 aa). Cysteine 113 (nucleophile) is an active-site residue. The interval 171–190 is calmodulin-binding; that stretch reads MPFWMVLQKKYPQFAQLHNG. Positions 364-401 are disordered; it reads QASAKSSSKGDDVKMTDAEGSSNQSGESSTGDQQEGAS. The span at 371 to 380 shows a compositional bias: basic and acidic residues; that stretch reads SKGDDVKMTD. The span at 382 to 399 shows a compositional bias: polar residues; that stretch reads EGSSNQSGESSTGDQQEG. Histidine 425 (proton acceptor) is an active-site residue.

This sequence belongs to the peptidase C19 family. Interacts with calmodulin (CaM).

It carries out the reaction Thiol-dependent hydrolysis of ester, thioester, amide, peptide and isopeptide bonds formed by the C-terminal Gly of ubiquitin (a 76-residue protein attached to proteins as an intracellular targeting signal).. In terms of biological role, recognizes and hydrolyzes the peptide bond at the C-terminal Gly of ubiquitin. Involved in the processing of poly-ubiquitin precursors as well as that of ubiquitinated proteins. This Arabidopsis thaliana (Mouse-ear cress) protein is Ubiquitin carboxyl-terminal hydrolase 7 (UBP7).